Consider the following 372-residue polypeptide: uncharacterized protein (372 aa).

The N-terminal stretch at 1–19 is a signal peptide; that stretch reads MKIFFLFIILLGIIQLSNS. N-linked (GlcNAc...) asparagine glycosylation is present at Asn18. The MRH domain occupies 20 to 160; it reads SSCNIDIAGD…IWTTKYSCAI (141 aa). Cys22 and Cys58 are disulfide-bonded. N-linked (GlcNAc...) asparagine glycosylation is present at Asn59. Cys128 and Cys158 form a disulfide bridge. A coiled-coil region spans residues 185–282; the sequence is NEILNEAQSN…VQFNDDIKLI (98 aa). The tract at residues 201 to 233 is disordered; sequence KNEDLNNNNNNNNNNNNNNNNNNNNNNNNNKIN. Residues 206-230 are compositionally biased toward low complexity; the sequence is NNNNNNNNNNNNNNNNNNNNNNNNN.

The protein localises to the secreted. This is an uncharacterized protein from Dictyostelium discoideum (Social amoeba).